A 143-amino-acid polypeptide reads, in one-letter code: MSGDRDDPRYPYPKDDAELRRRLTPMQYEVTQHAATEPPFTGEYTDTEDAGIYHCVVCGTALFESGAKYHSGCGWPSYFKPIDGEVIDEKMDYTHGMTRVEVRCNQCGAHLGHVFEDGPRDKTGLRYCINSAALNFEAKPERK.

The 124-residue stretch at 16–139 folds into the MsrB domain; it reads DAELRRRLTP…NSAALNFEAK (124 aa). Residues Cys55, Cys58, Cys104, and Cys107 each coordinate Zn(2+). The active-site Nucleophile is the Cys128.

Belongs to the MsrB Met sulfoxide reductase family. Zn(2+) serves as cofactor.

It catalyses the reaction L-methionyl-[protein] + [thioredoxin]-disulfide + H2O = L-methionyl-(R)-S-oxide-[protein] + [thioredoxin]-dithiol. The protein is Peptide methionine sulfoxide reductase MsrB of Burkholderia pseudomallei (strain 1710b).